The sequence spans 81 residues: Gamma-conotoxin-like TeA53 (81 aa).

An N-terminal signal peptide occupies residues 1 to 19 (MQKLTILLLVAAVLMSTQA). Positions 20 to 42 (LNQEQHQRAKINLLSKRKPPAER) are excised as a propeptide. Intrachain disulfides connect Cys-49–Cys-63, Cys-56–Cys-67, and Cys-62–Cys-72.

Belongs to the conotoxin O2 superfamily. In terms of tissue distribution, expressed by the venom duct.

It is found in the secreted. Gamma-conotoxins may act on voltage-gated non-specific cation pacemaker channels (HCN). The protein is Gamma-conotoxin-like TeA53 of Conus textile (Cloth-of-gold cone).